We begin with the raw amino-acid sequence, 85 residues long: Small ribosomal subunit protein bS16 (85 aa).

The protein belongs to the bacterial ribosomal protein bS16 family.

The protein is Small ribosomal subunit protein bS16 of Buchnera aphidicola subsp. Schizaphis graminum (strain Sg).